Consider the following 298-residue polypeptide: Myoblast determination protein 1 homolog (298 aa).

Positions 53-73 are enriched in basic and acidic residues; sequence PEEHPHTRAPPREPTEEEHVR. The tract at residues 53 to 77 is disordered; that stretch reads PEEHPHTRAPPREPTEEEHVRAPSG. The region spanning 100–151 is the bHLH domain; that stretch reads DRRKAATMRERRRLSKVNEAFETLKRCTSTNPNQRLPKVEILRNAIRYIESL. Disordered stretches follow at residues 170–220 and 242–298; these read SGES…GKSS and CPIL…YQVL. 2 stretches are compositionally biased toward polar residues: residues 173–183 and 257–284; these read SDASSPRSNCS and CSPQ…LPQE.

As to quaternary structure, efficient DNA binding requires dimerization with another bHLH protein. Seems to form active heterodimers with ITF-2.

It is found in the nucleus. Acts as a transcriptional activator that promotes transcription of muscle-specific target genes and plays a role in muscle differentiation. Induces fibroblasts to differentiate into myoblasts. Interacts with and is inhibited by the twist protein. This interaction probably involves the basic domains of both proteins. In Gallus gallus (Chicken), this protein is Myoblast determination protein 1 homolog (MYOD1).